A 99-amino-acid polypeptide reads, in one-letter code: Large ribosomal subunit protein bL21 (99 aa).

Belongs to the bacterial ribosomal protein bL21 family. Part of the 50S ribosomal subunit. Contacts protein L20.

In terms of biological role, this protein binds to 23S rRNA in the presence of protein L20. This chain is Large ribosomal subunit protein bL21, found in Mycoplasmopsis agalactiae (strain NCTC 10123 / CIP 59.7 / PG2) (Mycoplasma agalactiae).